A 912-amino-acid polypeptide reads, in one-letter code: Protein translocase subunit SecA (912 aa).

Residues Gln-87, 105-109 (GEGKT), and Asp-508 contribute to the ATP site. The interval 865–912 (DEEAAQVQSGNAPVPVSQVTRDEPKVGRNDPCPCGSGKKYKHCHGQLS) is disordered. Zn(2+) contacts are provided by Cys-896, Cys-898, Cys-907, and His-908. The segment covering 902-912 (KKYKHCHGQLS) has biased composition (basic residues).

This sequence belongs to the SecA family. As to quaternary structure, monomer and homodimer. Part of the essential Sec protein translocation apparatus which comprises SecA, SecYEG and auxiliary proteins SecDF-YajC and YidC. Zn(2+) serves as cofactor.

It localises to the cell inner membrane. The protein localises to the cytoplasm. The catalysed reaction is ATP + H2O + cellular proteinSide 1 = ADP + phosphate + cellular proteinSide 2.. Part of the Sec protein translocase complex. Interacts with the SecYEG preprotein conducting channel. Has a central role in coupling the hydrolysis of ATP to the transfer of proteins into and across the cell membrane, serving both as a receptor for the preprotein-SecB complex and as an ATP-driven molecular motor driving the stepwise translocation of polypeptide chains across the membrane. This is Protein translocase subunit SecA from Xanthomonas oryzae pv. oryzae (strain MAFF 311018).